Here is a 399-residue protein sequence, read N- to C-terminus: METWALILAAGQGSRLLSTIGIAKQFFVWKGIPLYWQSVLQFMHCARIRGVVLVFPSEVKDNEEKVVDRLAAQYDLRLPYIVISGGKLRQDSVKNALNTLPKNCSHVLIHDAARPFISPKLINNVIEVLEAGAVGVVPGISVTDTIKQVIQGEVIVTRPREQLIAVQTPQGFHLKTIVEGHNRATLEKWTVTDDASLLELCGHTVQVINGEIENRKISFPQDLLYMVEQPKTTVPIVGYGYDVHKYVTEDQINQPIRSMRLGGISIPNAPNVVAHSDGDVLLHALMDALLGCIGGGDIGLHFPDSDKRYDGINSAILLDHVLTKVLESSIKIVHMDATIVAQLPKISQYREAIRSNLSRLLDLDLANVNIKATTEEGLGFTGECKGIKAIVIVTAIRIS.

The interval 1–235 is 2-C-methyl-D-erythritol 4-phosphate cytidylyltransferase; that stretch reads METWALILAA…MVEQPKTTVP (235 aa). The segment at 236–399 is 2-C-methyl-D-erythritol 2,4-cyclodiphosphate synthase; it reads IVGYGYDVHK…IVIVTAIRIS (164 aa). Asp242 and His244 together coordinate a divalent metal cation. Residues 242 to 244 and 275 to 276 contribute to the 4-CDP-2-C-methyl-D-erythritol 2-phosphate site; these read DVH and HS. His283 lines the a divalent metal cation pocket. Residues 297–299, 302–306, 373–376, and Phe380 contribute to the 4-CDP-2-C-methyl-D-erythritol 2-phosphate site; these read DIG, FPDSD, and TTEE.

This sequence in the N-terminal section; belongs to the IspD/TarI cytidylyltransferase family. IspD subfamily. The protein in the C-terminal section; belongs to the IspF family. A divalent metal cation is required as a cofactor.

The enzyme catalyses 2-C-methyl-D-erythritol 4-phosphate + CTP + H(+) = 4-CDP-2-C-methyl-D-erythritol + diphosphate. It catalyses the reaction 4-CDP-2-C-methyl-D-erythritol 2-phosphate = 2-C-methyl-D-erythritol 2,4-cyclic diphosphate + CMP. It functions in the pathway isoprenoid biosynthesis; isopentenyl diphosphate biosynthesis via DXP pathway; isopentenyl diphosphate from 1-deoxy-D-xylulose 5-phosphate: step 2/6. Its pathway is isoprenoid biosynthesis; isopentenyl diphosphate biosynthesis via DXP pathway; isopentenyl diphosphate from 1-deoxy-D-xylulose 5-phosphate: step 4/6. Functionally, bifunctional enzyme that catalyzes the formation of 4-diphosphocytidyl-2-C-methyl-D-erythritol from CTP and 2-C-methyl-D-erythritol 4-phosphate (MEP) (IspD), and catalyzes the conversion of 4-diphosphocytidyl-2-C-methyl-D-erythritol 2-phosphate (CDP-ME2P) to 2-C-methyl-D-erythritol 2,4-cyclodiphosphate (ME-CPP) with a corresponding release of cytidine 5-monophosphate (CMP) (IspF). This Lawsonia intracellularis (strain PHE/MN1-00) protein is Bifunctional enzyme IspD/IspF.